A 291-amino-acid polypeptide reads, in one-letter code: Neugrin (291 aa).

The N-terminal stretch at 1 to 15 is a signal peptide; it reads MAVTLSLLLSGRVCA. The tract at residues 27–49 is disordered; the sequence is VADPGPIGREPDPDSDWEPEERE. Residues 39–49 are compositionally biased toward acidic residues; that stretch reads PDSDWEPEERE. Ser-41 carries the phosphoserine modification. Residue Asn-158 is glycosylated (N-linked (GlcNAc...) asparagine). The segment at 224–270 is disordered; that stretch reads VAAPLGHPRELQKYSSDSESPRRTGNGALPSDQKLEELKAEEPGNFS. Residues 256-265 show a composition bias toward basic and acidic residues; that stretch reads QKLEELKAEE.

It belongs to the neugrin family. Forms a regulatory protein-RNA complex, consisting of RCC1L, NGRN, RPUSD3, RPUSD4, TRUB2, FASTKD2 and 16S mt-rRNA. Interacts with 16S mt-rRNA; this interaction is direct.

The protein resides in the nucleus. The protein localises to the secreted. Its subcellular location is the mitochondrion membrane. Functionally, plays an essential role in mitochondrial ribosome biogenesis. As a component of a functional protein-RNA module, consisting of RCC1L, NGRN, RPUSD3, RPUSD4, TRUB2, FASTKD2 and 16S mitochondrial ribosomal RNA (16S mt-rRNA), controls 16S mt-rRNA abundance and is required for intra-mitochondrial translation of core subunits of the oxidative phosphorylation system. The protein is Neugrin (NGRN) of Pongo abelii (Sumatran orangutan).